A 361-amino-acid chain; its full sequence is MKNLFLFCRAGFEKECAAEIQQRAGELNVGGFVKANNNDAYVVYQCFEEDAADTLVKQLPLDSLIFARQMFAASDLLVDLPESDRISPIVAALSDVSKAGEVRVETPDTNEAKELSAFCRKFTVPLRQHLKKSGSLLAQENPKRPIIHVCFIGPGRAYVGYSYSNNSSPHFMGIPRLKMAADAPSRSSLKLDEAFGQFVPKEEQEERIRSGMNAVDLGACPGGWTYQLVRRGMFVSAVDNGPMDEKLMETGQVKHYREDGFRFEPQRKNIYWLVCDMVEKPARVAELIEAWAINGWFKEAIFNLKLPMKSRYKEVTAILETMQTILKENGVTDFKVQCKHLYHDRDEVTVHLWLRPNTAWN.

Residues Ser187, 220 to 223 (CPGG), Asp239, Asp259, and Asp276 contribute to the S-adenosyl-L-methionine site. Residue Lys305 is the Proton acceptor of the active site.

This sequence belongs to the class I-like SAM-binding methyltransferase superfamily. RNA methyltransferase RlmE family. RlmM subfamily. Monomer.

Its subcellular location is the cytoplasm. The enzyme catalyses cytidine(2498) in 23S rRNA + S-adenosyl-L-methionine = 2'-O-methylcytidine(2498) in 23S rRNA + S-adenosyl-L-homocysteine + H(+). In terms of biological role, catalyzes the 2'-O-methylation at nucleotide C2498 in 23S rRNA. This is Ribosomal RNA large subunit methyltransferase M from Shewanella putrefaciens (strain CN-32 / ATCC BAA-453).